The primary structure comprises 461 residues: Trigger factor (461 aa).

A PPIase FKBP-type domain is found at 169-256 (GDTAVIDFAG…LKDLKIKELP (88 aa)). The disordered stretch occupies residues 432–461 (PGEAIEPGSGEDAPPEVAAGATEPEAQPNS).

It belongs to the FKBP-type PPIase family. Tig subfamily.

Its subcellular location is the cytoplasm. It catalyses the reaction [protein]-peptidylproline (omega=180) = [protein]-peptidylproline (omega=0). Involved in protein export. Acts as a chaperone by maintaining the newly synthesized protein in an open conformation. Functions as a peptidyl-prolyl cis-trans isomerase. The chain is Trigger factor from Gloeobacter violaceus (strain ATCC 29082 / PCC 7421).